The chain runs to 424 residues: Acetyl-CoA acetyltransferase, mitochondrial (424 aa).

Residues 1 to 30 (MAALVALHGVVRRPLLRGLLQEVRCLERSY) constitute a mitochondrion transit peptide. Lysine 63 is modified (N6-acetyllysine; alternate). An N6-succinyllysine; alternate modification is found at lysine 63. Lysine 75 carries the N6-succinyllysine modification. The active-site Acyl-thioester intermediate is cysteine 123. N6-acetyllysine; alternate occurs at positions 171, 178, 187, and 199. An N6-succinyllysine; alternate mark is found at lysine 171, lysine 178, lysine 187, and lysine 199. A Phosphoserine modification is found at serine 204. Tyrosine 216 contributes to the CoA binding site. Residue tyrosine 216 coordinates K(+). N6-acetyllysine; alternate occurs at positions 220 and 227. 2 positions are modified to N6-succinyllysine; alternate: lysine 220 and lysine 227. Residue lysine 240 is modified to N6-succinyllysine. Lysine 242 bears the N6-acetyllysine; alternate mark. Lysine 242 carries the post-translational modification N6-succinyllysine; alternate. 2 positions are modified to N6-acetyllysine: lysine 248 and lysine 254. Residues 255–257 (RVD) and lysine 260 contribute to the CoA site. Lysine 260 carries the post-translational modification N6-acetyllysine; alternate. Residue lysine 260 is modified to N6-succinyllysine; alternate. Residues lysine 263 and lysine 265 each carry the N6-succinyllysine modification. Lysine 270 carries the post-translational modification N6-acetyllysine. Residues alanine 277, alanine 278, and alanine 280 each contribute to the K(+) site. Serine 281 is a CoA binding site. The residue at position 335 (lysine 335) is an N6-acetyllysine. Valine 378 is a K(+) binding site. The Proton donor/acceptor role is filled by cysteine 410.

The protein belongs to the thiolase-like superfamily. Thiolase family. Homotetramer. Succinylation at Lys-265, adjacent to a coenzyme A binding site. Desuccinylated by SIRT5.

Its subcellular location is the mitochondrion. It catalyses the reaction 2 acetyl-CoA = acetoacetyl-CoA + CoA. It carries out the reaction propanoyl-CoA + acetyl-CoA = 2-methyl-3-oxobutanoyl-CoA + CoA. Its pathway is lipid metabolism; fatty acid beta-oxidation. Activated by potassium ions, but not sodium ions. This is one of the enzymes that catalyzes the last step of the mitochondrial beta-oxidation pathway, an aerobic process breaking down fatty acids into acetyl-CoA. Using free coenzyme A/CoA, catalyzes the thiolytic cleavage of medium- to long-chain 3-oxoacyl-CoAs into acetyl-CoA and a fatty acyl-CoA shortened by two carbon atoms. The activity of the enzyme is reversible and it can also catalyze the condensation of two acetyl-CoA molecules into acetoacetyl-CoA. Thereby, it plays a major role in ketone body metabolism. The protein is Acetyl-CoA acetyltransferase, mitochondrial (Acat1) of Mus musculus (Mouse).